The following is a 307-amino-acid chain: Oxygen-dependent coproporphyrinogen-III oxidase (307 aa).

Residue Ser99 coordinates substrate. Residues His103 and His113 each contribute to the a divalent metal cation site. His113 functions as the Proton donor in the catalytic mechanism. 115–117 (NVR) serves as a coordination point for substrate. A divalent metal cation is bound by residues His152 and His182. The segment at 247 to 282 (YVEFNLVFDRGTLFGLQSGGRTESILMSMPPVANWR) is important for dimerization. 265–267 (GGR) provides a ligand contact to substrate.

This sequence belongs to the aerobic coproporphyrinogen-III oxidase family. Homodimer. Requires a divalent metal cation as cofactor.

The protein resides in the cytoplasm. It catalyses the reaction coproporphyrinogen III + O2 + 2 H(+) = protoporphyrinogen IX + 2 CO2 + 2 H2O. The protein operates within porphyrin-containing compound metabolism; protoporphyrin-IX biosynthesis; protoporphyrinogen-IX from coproporphyrinogen-III (O2 route): step 1/1. Involved in the heme biosynthesis. Catalyzes the aerobic oxidative decarboxylation of propionate groups of rings A and B of coproporphyrinogen-III to yield the vinyl groups in protoporphyrinogen-IX. The chain is Oxygen-dependent coproporphyrinogen-III oxidase from Burkholderia orbicola (strain MC0-3).